The primary structure comprises 406 residues: Imidazolonepropionase (406 aa).

Fe(3+) is bound by residues histidine 65 and histidine 67. Zn(2+)-binding residues include histidine 65 and histidine 67. 3 residues coordinate 4-imidazolone-5-propanoate: arginine 74, tyrosine 137, and histidine 170. Tyrosine 137 is a binding site for N-formimidoyl-L-glutamate. Histidine 235 serves as a coordination point for Fe(3+). Histidine 235 serves as a coordination point for Zn(2+). Glutamine 238 lines the 4-imidazolone-5-propanoate pocket. Aspartate 310 contributes to the Fe(3+) binding site. Aspartate 310 contacts Zn(2+). Asparagine 312 and glycine 314 together coordinate N-formimidoyl-L-glutamate. Threonine 315 contacts 4-imidazolone-5-propanoate.

This sequence belongs to the metallo-dependent hydrolases superfamily. HutI family. Zn(2+) serves as cofactor. Requires Fe(3+) as cofactor.

It localises to the cytoplasm. The enzyme catalyses 4-imidazolone-5-propanoate + H2O = N-formimidoyl-L-glutamate. It functions in the pathway amino-acid degradation; L-histidine degradation into L-glutamate; N-formimidoyl-L-glutamate from L-histidine: step 3/3. Catalyzes the hydrolytic cleavage of the carbon-nitrogen bond in imidazolone-5-propanoate to yield N-formimidoyl-L-glutamate. It is the third step in the universal histidine degradation pathway. This is Imidazolonepropionase from Vibrio vulnificus (strain YJ016).